The chain runs to 204 residues: MECNLVNLSNDNVGAAQLNPLIFSAKQKLSILHDIVRWQLAKRRAGTHKTKGISDVSGTTAKPYGQKRTGRARQGSLRSPQFRGGGIIFGPVVRSHTYSLNKKVRKFGLKIALSLKYLNNQVIILDNLNIDVKKTSEMCKCIKNFKFSSFLIVGDYGDDLLRAAKNLHYVDLIKPIGLNVFDILNHECVMLTKDTLKHLEGRLL.

Positions 49–76 are disordered; the sequence is KTKGISDVSGTTAKPYGQKRTGRARQGS.

It belongs to the universal ribosomal protein uL4 family. In terms of assembly, part of the 50S ribosomal subunit.

Functionally, one of the primary rRNA binding proteins, this protein initially binds near the 5'-end of the 23S rRNA. It is important during the early stages of 50S assembly. It makes multiple contacts with different domains of the 23S rRNA in the assembled 50S subunit and ribosome. Its function is as follows. Forms part of the polypeptide exit tunnel. The protein is Large ribosomal subunit protein uL4 of Wolbachia pipientis wMel.